A 277-amino-acid polypeptide reads, in one-letter code: Ribosomal RNA small subunit methyltransferase A (277 aa).

Residues asparagine 18, leucine 20, glycine 45, glutamate 66, aspartate 89, and asparagine 110 each coordinate S-adenosyl-L-methionine.

The protein belongs to the class I-like SAM-binding methyltransferase superfamily. rRNA adenine N(6)-methyltransferase family. RsmA subfamily.

The protein localises to the cytoplasm. It carries out the reaction adenosine(1518)/adenosine(1519) in 16S rRNA + 4 S-adenosyl-L-methionine = N(6)-dimethyladenosine(1518)/N(6)-dimethyladenosine(1519) in 16S rRNA + 4 S-adenosyl-L-homocysteine + 4 H(+). In terms of biological role, specifically dimethylates two adjacent adenosines (A1518 and A1519) in the loop of a conserved hairpin near the 3'-end of 16S rRNA in the 30S particle. May play a critical role in biogenesis of 30S subunits. The polypeptide is Ribosomal RNA small subunit methyltransferase A (Cupriavidus taiwanensis (strain DSM 17343 / BCRC 17206 / CCUG 44338 / CIP 107171 / LMG 19424 / R1) (Ralstonia taiwanensis (strain LMG 19424))).